We begin with the raw amino-acid sequence, 100 residues long: Small ribosomal subunit protein uS14c (100 aa).

The protein belongs to the universal ribosomal protein uS14 family. Part of the 30S ribosomal subunit.

The protein localises to the plastid. The protein resides in the chloroplast. Functionally, binds 16S rRNA, required for the assembly of 30S particles. The chain is Small ribosomal subunit protein uS14c from Guillardia theta (Cryptophyte).